A 389-amino-acid polypeptide reads, in one-letter code: Geranylgeranyl pyrophosphate synthase A (389 aa).

Residues K99, R102, and H131 each coordinate isopentenyl diphosphate. Residues D138 and D142 each coordinate Mg(2+). R147 contributes to the dimethylallyl diphosphate binding site. Position 148 (R148) interacts with isopentenyl diphosphate.

It belongs to the FPP/GGPP synthase family. The cofactor is Mg(2+).

Its subcellular location is the cytoplasm. It catalyses the reaction isopentenyl diphosphate + (2E)-geranyl diphosphate = (2E,6E)-farnesyl diphosphate + diphosphate. The enzyme catalyses isopentenyl diphosphate + (2E,6E)-farnesyl diphosphate = (2E,6E,10E)-geranylgeranyl diphosphate + diphosphate. Its pathway is isoprenoid biosynthesis; farnesyl diphosphate biosynthesis; farnesyl diphosphate from geranyl diphosphate and isopentenyl diphosphate: step 1/1. The protein operates within isoprenoid biosynthesis; geranylgeranyl diphosphate biosynthesis; geranylgeranyl diphosphate from farnesyl diphosphate and isopentenyl diphosphate: step 1/1. Catalyzes the trans-addition of the 2 molecules of isopentenyl diphosphate (IPP) onto geranyl diphosphate (GDP) to form geranylgeranyl pyrophosphate (GGDP). Does not catalyze the conversion of dimethylallyl diphosphate (DMAPP). In Phomopsis amygdali (Fusicoccum amygdali), this protein is Geranylgeranyl pyrophosphate synthase A (GGS-A).